The sequence spans 99 residues: NADH-quinone oxidoreductase subunit K (99 aa).

Helical transmembrane passes span 3-23 (PDNY…GVLL), 28-48 (IVMF…FVTF), and 59-79 (VVAF…LAII).

This sequence belongs to the complex I subunit 4L family. In terms of assembly, NDH-1 is composed of 14 different subunits. Subunits NuoA, H, J, K, L, M, N constitute the membrane sector of the complex.

It localises to the cell membrane. It carries out the reaction a quinone + NADH + 5 H(+)(in) = a quinol + NAD(+) + 4 H(+)(out). NDH-1 shuttles electrons from NADH, via FMN and iron-sulfur (Fe-S) centers, to quinones in the respiratory chain. The immediate electron acceptor for the enzyme in this species is believed to be a menaquinone. Couples the redox reaction to proton translocation (for every two electrons transferred, four hydrogen ions are translocated across the cytoplasmic membrane), and thus conserves the redox energy in a proton gradient. This is NADH-quinone oxidoreductase subunit K from Mycolicibacterium gilvum (strain PYR-GCK) (Mycobacterium gilvum (strain PYR-GCK)).